We begin with the raw amino-acid sequence, 316 residues long: Acetyl-coenzyme A carboxylase carboxyl transferase subunit alpha (316 aa).

In terms of domain architecture, CoA carboxyltransferase C-terminal spans 39-293; sequence RLQDKSESLT…REQLNSQLHM (255 aa).

The protein belongs to the AccA family. In terms of assembly, acetyl-CoA carboxylase is a heterohexamer composed of biotin carboxyl carrier protein (AccB), biotin carboxylase (AccC) and two subunits each of ACCase subunit alpha (AccA) and ACCase subunit beta (AccD).

The protein resides in the cytoplasm. It catalyses the reaction N(6)-carboxybiotinyl-L-lysyl-[protein] + acetyl-CoA = N(6)-biotinyl-L-lysyl-[protein] + malonyl-CoA. The protein operates within lipid metabolism; malonyl-CoA biosynthesis; malonyl-CoA from acetyl-CoA: step 1/1. In terms of biological role, component of the acetyl coenzyme A carboxylase (ACC) complex. First, biotin carboxylase catalyzes the carboxylation of biotin on its carrier protein (BCCP) and then the CO(2) group is transferred by the carboxyltransferase to acetyl-CoA to form malonyl-CoA. This is Acetyl-coenzyme A carboxylase carboxyl transferase subunit alpha from Stutzerimonas stutzeri (strain A1501) (Pseudomonas stutzeri).